A 109-amino-acid chain; its full sequence is Large ribosomal subunit protein eL30 (109 aa).

It belongs to the eukaryotic ribosomal protein eL30 family.

This Yarrowia lipolytica (strain CLIB 122 / E 150) (Yeast) protein is Large ribosomal subunit protein eL30 (RPL30).